Reading from the N-terminus, the 298-residue chain is Probable 2-(5''-triphosphoribosyl)-3'-dephosphocoenzyme-A synthase 2 (298 aa).

It belongs to the CitG/MdcB family.

The catalysed reaction is 3'-dephospho-CoA + ATP = 2'-(5''-triphospho-alpha-D-ribosyl)-3'-dephospho-CoA + adenine. This is Probable 2-(5''-triphosphoribosyl)-3'-dephosphocoenzyme-A synthase 2 from Salmonella typhi.